Reading from the N-terminus, the 115-residue chain is Insulin-like peptide IlO1_i1 (115 aa).

A signal peptide spans 1–20; that stretch reads MFVYTTIMLLLLAEINHSQG. 3 disulfide bridges follow: Cys40–Cys101, Cys52–Cys114, and Cys100–Cys105. Positions 59–93 are cleaved as a propeptide — c peptide; the sequence is RRNRITGLDQRSIFESNLLAKRFLISRRQIVNNRR.

The protein belongs to the insulin family. Expressed in tentacles.

The protein localises to the secreted. Functionally, heterodimer with unknown function. Surprisingly, the truncated synthetic analog (dimer of 27-58 and 94-115) does not bind to long insulin receptor (HIR-B) and insulin-like growth factor 1 receptor. This truncated synthetic analog shows very weak inhibitory activity on different voltage-gated channels. The sequence is that of Insulin-like peptide IlO1_i1 from Oulactis sp. (Sea anemone).